A 541-amino-acid chain; its full sequence is Glucose-6-phosphate isomerase (541 aa).

Glu346 functions as the Proton donor in the catalytic mechanism. Residues His377 and Lys506 contribute to the active site.

This sequence belongs to the GPI family.

Its subcellular location is the cytoplasm. It catalyses the reaction alpha-D-glucose 6-phosphate = beta-D-fructose 6-phosphate. It functions in the pathway carbohydrate biosynthesis; gluconeogenesis. It participates in carbohydrate degradation; glycolysis; D-glyceraldehyde 3-phosphate and glycerone phosphate from D-glucose: step 2/4. Its function is as follows. Catalyzes the reversible isomerization of glucose-6-phosphate to fructose-6-phosphate. The protein is Glucose-6-phosphate isomerase of Agrobacterium fabrum (strain C58 / ATCC 33970) (Agrobacterium tumefaciens (strain C58)).